The chain runs to 245 residues: 2,3-bisphosphoglycerate-dependent phosphoglycerate mutase (245 aa).

Residues 8-15 (RHGQSLWN), 21-22 (TG), Arg-60, 87-90 (ERHY), Lys-98, 114-115 (RR), and 183-184 (GN) contribute to the substrate site. Catalysis depends on His-9, which acts as the Tele-phosphohistidine intermediate. The active-site Proton donor/acceptor is Glu-87.

This sequence belongs to the phosphoglycerate mutase family. BPG-dependent PGAM subfamily.

It catalyses the reaction (2R)-2-phosphoglycerate = (2R)-3-phosphoglycerate. It functions in the pathway carbohydrate degradation; glycolysis; pyruvate from D-glyceraldehyde 3-phosphate: step 3/5. Its function is as follows. Catalyzes the interconversion of 2-phosphoglycerate and 3-phosphoglycerate. The sequence is that of 2,3-bisphosphoglycerate-dependent phosphoglycerate mutase from Bacillus cereus (strain AH187).